Reading from the N-terminus, the 64-residue chain is Large ribosomal subunit protein bL35 (64 aa).

The protein belongs to the bacterial ribosomal protein bL35 family.

The polypeptide is Large ribosomal subunit protein bL35 (Shewanella frigidimarina (strain NCIMB 400)).